We begin with the raw amino-acid sequence, 191 residues long: General negative regulator of transcription subunit 2 (191 aa).

The protein belongs to the CNOT2/3/5 family. Forms a NOT protein complex that comprises NOT1, NOT2, NOT3, NOT4 and NOT5. Subunit of the 1.0 MDa CCR4-NOT core complex that contains CCR4, CAF1, NOT1, NOT2, NOT3, NOT4, NOT5, CAF40 and CAF130. In the complex interacts with NOT1 and NOT5. The core complex probably is part of a less characterized 1.9 MDa CCR4-NOT complex.

The protein localises to the cytoplasm. Its subcellular location is the nucleus. Acts as a component of the CCR4-NOT core complex, which in the nucleus seems to be a general transcription factor, and in the cytoplasm the major mRNA deadenylase involved in mRNA turnover. NOT2 is required for the integrity of the complex. The NOT protein subcomplex negatively regulates the basal and activated transcription of many genes. Preferentially affects TC-type TATA element-dependent transcription. Could directly or indirectly inhibit component(s) of the general transcription machinery. The protein is General negative regulator of transcription subunit 2 (CDC36) of Saccharomyces cerevisiae (strain ATCC 204508 / S288c) (Baker's yeast).